Reading from the N-terminus, the 251-residue chain is Ubiquinone/menaquinone biosynthesis C-methyltransferase UbiE (251 aa).

The S-adenosyl-L-methionine site is built by threonine 74, aspartate 92, and serine 132.

This sequence belongs to the class I-like SAM-binding methyltransferase superfamily. MenG/UbiE family.

The catalysed reaction is a 2-demethylmenaquinol + S-adenosyl-L-methionine = a menaquinol + S-adenosyl-L-homocysteine + H(+). It catalyses the reaction a 2-methoxy-6-(all-trans-polyprenyl)benzene-1,4-diol + S-adenosyl-L-methionine = a 5-methoxy-2-methyl-3-(all-trans-polyprenyl)benzene-1,4-diol + S-adenosyl-L-homocysteine + H(+). The protein operates within quinol/quinone metabolism; menaquinone biosynthesis; menaquinol from 1,4-dihydroxy-2-naphthoate: step 2/2. It functions in the pathway cofactor biosynthesis; ubiquinone biosynthesis. In terms of biological role, methyltransferase required for the conversion of demethylmenaquinol (DMKH2) to menaquinol (MKH2) and the conversion of 2-polyprenyl-6-methoxy-1,4-benzoquinol (DDMQH2) to 2-polyprenyl-3-methyl-6-methoxy-1,4-benzoquinol (DMQH2). The sequence is that of Ubiquinone/menaquinone biosynthesis C-methyltransferase UbiE from Rubrivivax gelatinosus (strain NBRC 100245 / IL144).